Consider the following 389-residue polypeptide: Mating-type protein MAT-1 (389 aa).

Residues 70 to 127 constitute a DNA-binding region (alpha box); sequence KAKKALNAFVGFRCYYISIPHFKSWPMKKLSNLIGLLWETDPNKSLWSLMTKAWSAIR.

Belongs to the MATALPHA1 family.

The protein resides in the nucleus. Functionally, mating type proteins are sequence specific DNA-binding proteins that act as master switches in fungal differentiation by controlling gene expression in a cell type-specific fashion. Transcriptional activator that induces the transcription of alpha-specific genes. The chain is Mating-type protein MAT-1 (MAT1) from Alternaria alternata (Alternaria rot fungus).